The primary structure comprises 295 residues: Cuticle collagen 3A3 (295 aa).

Residues 81–278 (AITSSEENGG…GRPGEPGICP (198 aa)) form a disordered region. Composition is skewed to pro residues over residues 97-109 (PGPP…PGRP) and 146-160 (AGPP…PPGD). Triple-helical region stretches follow at residues 98–127 (GPPG…PGLP), 147–203 (GPPG…VGED), and 212–277 (GDQG…PGIC). Over residues 172 to 182 (QDGIPGQQGTK) the composition is skewed to low complexity. A compositionally biased stretch (pro residues) spans 217 to 228 (PGEPGPEGPPGE). Positions 229 to 244 (PGLQGPVGMPGQVGQK) are enriched in low complexity. Pro residues predominate over residues 261-271 (RPGPPGPPGRP).

It belongs to the cuticular collagen family.

Its function is as follows. Nematode cuticles are composed largely of collagen-like proteins. The cuticle functions both as an exoskeleton and as a barrier to protect the worm from its environment. In Haemonchus contortus (Barber pole worm), this protein is Cuticle collagen 3A3 (3A3).